A 623-amino-acid polypeptide reads, in one-letter code: Transketolase (623 aa).

Methionine 1 is subject to N-acetylmethionine. 2 positions are modified to N6-acetyllysine: lysine 6 and lysine 11. Histidine 37 is a binding site for substrate. Thiamine diphosphate-binding residues include serine 40 and histidine 77. A Phosphoserine modification is found at serine 104. Thiamine diphosphate is bound at residue 123–125; the sequence is GSL. An N6-acetyllysine modification is found at lysine 144. Residue aspartate 155 participates in Mg(2+) binding. Positions 156 and 185 each coordinate thiamine diphosphate. Mg(2+)-binding residues include asparagine 185 and leucine 187. 3 positions are modified to N6-acetyllysine: lysine 204, lysine 232, and lysine 241. Thiamine diphosphate-binding residues include lysine 244 and histidine 258. A substrate-binding site is contributed by histidine 258. The residue at position 260 (lysine 260) is an N6-acetyllysine. A Phosphotyrosine modification is found at tyrosine 275. Threonine 287 carries the phosphothreonine modification. Serine 295 is modified (phosphoserine). Arginine 318 contacts substrate. Lysine 352 is covalently cross-linked (Glycyl lysine isopeptide (Lys-Gly) (interchain with G-Cter in SUMO2)). Residue glutamate 366 is the Proton donor of the active site. Phenylalanine 392 serves as a coordination point for thiamine diphosphate. Residues histidine 416 and aspartate 424 each coordinate substrate. Glutamine 428 contributes to the thiamine diphosphate binding site. Arginine 474 provides a ligand contact to substrate. Lysine 538 and lysine 603 each carry N6-acetyllysine.

It belongs to the transketolase family. In terms of assembly, homodimer. It depends on Mg(2+) as a cofactor. Ca(2+) is required as a cofactor. Requires Mn(2+) as cofactor. Co(2+) serves as cofactor. The cofactor is thiamine diphosphate.

It catalyses the reaction D-sedoheptulose 7-phosphate + D-glyceraldehyde 3-phosphate = aldehydo-D-ribose 5-phosphate + D-xylulose 5-phosphate. Functionally, catalyzes the transfer of a two-carbon ketol group from a ketose donor to an aldose acceptor, via a covalent intermediate with the cofactor thiamine pyrophosphate. This Pongo abelii (Sumatran orangutan) protein is Transketolase (TKT).